We begin with the raw amino-acid sequence, 638 residues long: RNA exonuclease 3 (638 aa).

The interval 37–136 is disordered; it reads AQDQVLEQKE…PPRRAPKEAL (100 aa). Positions 55–76 are enriched in basic and acidic residues; that stretch reads LKLEPRPEAKETPKDDLRHVSD. A compositionally biased stretch (polar residues) spans 77 to 111; sequence SGRSTPVKKTTAPATNAENISPVSRQPNIPKNTAT. Positions 408–584 constitute an Exonuclease domain; the sequence is ICFDCEMGYT…VEDALATGDL (177 aa). Positions 612-622 are enriched in polar residues; the sequence is DSSSNTVSMQT. The segment at 612–638 is disordered; sequence DSSSNTVSMQTKLGEGAGAKRAREGTS.

The protein belongs to the REXO1/REXO3 family.

It localises to the cytoplasm. The protein resides in the nucleus. In terms of biological role, 3' to 5' exoribonuclease required for proper 3' end maturation of MRP RNA and of the U5L snRNA. The polypeptide is RNA exonuclease 3 (rex3) (Emericella nidulans (strain FGSC A4 / ATCC 38163 / CBS 112.46 / NRRL 194 / M139) (Aspergillus nidulans)).